Here is a 619-residue protein sequence, read N- to C-terminus: 4-hydroxyphenylalkanoate adenylyltransferase (619 aa).

Belongs to the ATP-dependent AMP-binding enzyme family.

The catalysed reaction is 17-(4-hydroxyphenyl)heptadecanoate + holo-[(phenol)carboxyphthiodiolenone synthase] + ATP = 17-(4-hydroxyphenyl)heptadecanoyl-[(phenol)carboxyphthiodiolenone synthase] + AMP + diphosphate. The enzyme catalyses 19-(4-hydroxyphenyl)nonadecanoate + holo-[(phenol)carboxyphthiodiolenone synthase] + ATP = 19-(4-hydroxyphenyl)nonadecanoyl-[(phenol)carboxyphthiodiolenone synthase] + AMP + diphosphate. It catalyses the reaction dodecanoate + ATP + H(+) = dodecanoyl-AMP + diphosphate. It participates in lipid metabolism; fatty acid biosynthesis. Catalyzes the activation of long-chain fatty acids as acyl-adenylates (acyl-AMP), which are then transferred to the multifunctional polyketide synthase PpsA for further chain extension. Involved in the biosynthesis of phenolphthiocerol, which is an important intermediate in the biosynthesis of phenolic glycolipid (PGL), also called mycosid B. The protein is 4-hydroxyphenylalkanoate adenylyltransferase (fadD29) of Mycobacterium tuberculosis (strain ATCC 25618 / H37Rv).